Consider the following 142-residue polypeptide: Photosystem II extrinsic protein U (142 aa).

A signal peptide spans 1–29; sequence MKGLVRLLTVFSLLLGCWGWLGTTQIAQA.

This sequence belongs to the PsbU family. As to quaternary structure, PSII is composed of 1 copy each of membrane proteins PsbA, PsbB, PsbC, PsbD, PsbE, PsbF, PsbH, PsbI, PsbJ, PsbK, PsbL, PsbM, PsbT, PsbX, PsbY, PsbZ, Psb30/Ycf12, peripheral proteins PsbO, CyanoQ (PsbQ), PsbU, PsbV and a large number of cofactors. It forms dimeric complexes.

It localises to the cellular thylakoid membrane. Functionally, one of the extrinsic, lumenal subunits of photosystem II (PSII). PSII is a light-driven water plastoquinone oxidoreductase, using light energy to abstract electrons from H(2)O, generating a proton gradient subsequently used for ATP formation. The extrinsic proteins stabilize the structure of photosystem II oxygen-evolving complex (OEC), the ion environment of oxygen evolution and protect the OEC against heat-induced inactivation. The chain is Photosystem II extrinsic protein U from Nostoc sp. (strain PCC 7120 / SAG 25.82 / UTEX 2576).